We begin with the raw amino-acid sequence, 510 residues long: GMP synthase [glutamine-hydrolyzing] (510 aa).

The Glutamine amidotransferase type-1 domain occupies 5–194; that stretch reads DILVLDFGSQ…FAKICGCEST (190 aa). Cys82 acts as the Nucleophile in catalysis. Catalysis depends on residues His169 and Glu171. One can recognise a GMPS ATP-PPase domain in the interval 195–385; it reads WNMGSFAKKE…LGLSRDIVYR (191 aa). An ATP-binding site is contributed by 222–228; sequence SGGVDSS.

Homodimer.

The enzyme catalyses XMP + L-glutamine + ATP + H2O = GMP + L-glutamate + AMP + diphosphate + 2 H(+). It functions in the pathway purine metabolism; GMP biosynthesis; GMP from XMP (L-Gln route): step 1/1. In terms of biological role, catalyzes the synthesis of GMP from XMP. The polypeptide is GMP synthase [glutamine-hydrolyzing] (Campylobacter fetus subsp. fetus (strain 82-40)).